The sequence spans 412 residues: uncharacterized protein (412 aa).

Belongs to the PQQ oxidoreductase GdhB family. The cofactor is pyrroloquinoline quinone.

This is an uncharacterized protein from Synechocystis sp. (strain ATCC 27184 / PCC 6803 / Kazusa).